Reading from the N-terminus, the 880-residue chain is Leucine--tRNA ligase (880 aa).

The 'HIGH' region motif lies at 49–59 (PYPSGRIHMGH). The short motif at 638–642 (KMSKS) is the 'KMSKS' region element. Residue Lys-641 participates in ATP binding.

Belongs to the class-I aminoacyl-tRNA synthetase family.

The protein resides in the cytoplasm. The enzyme catalyses tRNA(Leu) + L-leucine + ATP = L-leucyl-tRNA(Leu) + AMP + diphosphate. This chain is Leucine--tRNA ligase, found in Bartonella quintana (strain Toulouse) (Rochalimaea quintana).